Here is a 360-residue protein sequence, read N- to C-terminus: Peptide chain release factor 1 (360 aa).

Glutamine 235 carries the N5-methylglutamine modification. A disordered region spans residues 286–311; sequence QAQAQADTRRNLLGSGDRSDKIRTYN.

It belongs to the prokaryotic/mitochondrial release factor family. In terms of processing, methylated by PrmC. Methylation increases the termination efficiency of RF1.

The protein resides in the cytoplasm. Peptide chain release factor 1 directs the termination of translation in response to the peptide chain termination codons UAG and UAA. In Histophilus somni (strain 2336) (Haemophilus somnus), this protein is Peptide chain release factor 1.